Reading from the N-terminus, the 323-residue chain is tRNA dimethylallyltransferase (323 aa).

12–19 (GPTAAGKT) provides a ligand contact to ATP. Position 14 to 19 (14 to 19 (TAAGKT)) interacts with substrate. Interaction with substrate tRNA stretches follow at residues 37 to 40 (DSAL) and 161 to 165 (QRLSR).

It belongs to the IPP transferase family. Monomer. The cofactor is Mg(2+).

The catalysed reaction is adenosine(37) in tRNA + dimethylallyl diphosphate = N(6)-dimethylallyladenosine(37) in tRNA + diphosphate. Its function is as follows. Catalyzes the transfer of a dimethylallyl group onto the adenine at position 37 in tRNAs that read codons beginning with uridine, leading to the formation of N6-(dimethylallyl)adenosine (i(6)A). This is tRNA dimethylallyltransferase from Pseudomonas fluorescens (strain SBW25).